A 159-amino-acid chain; its full sequence is Putative 4-hydroxy-4-methyl-2-oxoglutarate aldolase (159 aa).

Substrate contacts are provided by residues 75 to 78 (GDQL) and Arg-97. Asp-98 lines the a divalent metal cation pocket.

It belongs to the class II aldolase/RraA-like family. As to quaternary structure, homotrimer. Requires a divalent metal cation as cofactor.

The enzyme catalyses 4-hydroxy-4-methyl-2-oxoglutarate = 2 pyruvate. It carries out the reaction oxaloacetate + H(+) = pyruvate + CO2. Functionally, catalyzes the aldol cleavage of 4-hydroxy-4-methyl-2-oxoglutarate (HMG) into 2 molecules of pyruvate. Also contains a secondary oxaloacetate (OAA) decarboxylase activity due to the common pyruvate enolate transition state formed following C-C bond cleavage in the retro-aldol and decarboxylation reactions. This is Putative 4-hydroxy-4-methyl-2-oxoglutarate aldolase from Aromatoleum aromaticum (strain DSM 19018 / LMG 30748 / EbN1) (Azoarcus sp. (strain EbN1)).